A 474-amino-acid chain; its full sequence is Proline--tRNA ligase (474 aa).

The protein belongs to the class-II aminoacyl-tRNA synthetase family. ProS type 3 subfamily. Homodimer.

Its subcellular location is the cytoplasm. The enzyme catalyses tRNA(Pro) + L-proline + ATP = L-prolyl-tRNA(Pro) + AMP + diphosphate. Catalyzes the attachment of proline to tRNA(Pro) in a two-step reaction: proline is first activated by ATP to form Pro-AMP and then transferred to the acceptor end of tRNA(Pro). The chain is Proline--tRNA ligase from Onion yellows phytoplasma (strain OY-M).